Reading from the N-terminus, the 690-residue chain is Sodium-dependent phosphate transport protein 2B (690 aa).

Positions 1–42 (MAPWPELGDAQPNPDKYLEGAAGQQPTAPDKSKETNKTDNTE) are disordered. Topologically, residues 1 to 100 (MAPWPELGDA…ILCFFQGIGR (100 aa)) are cytoplasmic. Over residues 30 to 40 (DKSKETNKTDN) the composition is skewed to basic and acidic residues. Residues 101 to 121 (LILLLGFLYFFVCSLDILSSA) traverse the membrane as a helical segment. Topologically, residues 122 to 135 (FQLVGGKMAGQFFS) are extracellular. The chain crosses the membrane as a helical span at residues 136–156 (NSSIMSNPLLGLVIGVLVTVL). Residues 157-212 (VQSSSTSTSIVVSMVSSSLLTVRAAIPIIMGANIGTSITNTIVALMQVGDRSEFRR) are Cytoplasmic-facing. Residues 213–233 (AFAGATVHDFFNWLSVLVLLP) traverse the membrane as a helical segment. Over 234–362 (VEVATHYLEI…IFVNFHLPDL (129 aa)) the chain is Extracellular. Residues asparagine 295, asparagine 308, asparagine 313, asparagine 321, and asparagine 340 are each glycosylated (N-linked (GlcNAc...) asparagine). Cysteine 303 and cysteine 350 are oxidised to a cystine. A helical membrane pass occupies residues 363 to 383 (AVGTILLILSLLVLCGCLIMI). The Cytoplasmic segment spans residues 384 to 407 (VKILGSVLKGQVATVIKKTINTDF). A helical transmembrane segment spans residues 408 to 428 (PFPFAWLTGYLAILVGAGMTF). Over 429 to 485 (IVQSSSVFTSALTPLIGIGVITIERAYPLTLGSNIGTTTTAILAALASPGNALRSSL) the chain is Extracellular. A helical membrane pass occupies residues 486 to 506 (QIALCHFFFNISGILLWYPIP). At 507-525 (FTRLPIRMAKGLGNISAKY) the chain is on the cytoplasmic side. Residues 526–546 (RWFAVFYLIIFFFLIPLTVFG) form a helical membrane-spanning segment. The Extracellular segment spans residues 547 to 552 (LSLAGW). Residues 553–573 (RVLVGVGVPVVFIIILVLCLR) traverse the membrane as a helical segment. Over 574–689 (LLQSRCPRVL…ASDSKTECTA (116 aa)) the chain is Cytoplasmic.

It belongs to the SLC34A transporter family. Highly expressed in lung. Also detected in pancreas, kidney, small intestine, ovary, testis, prostate and mammary gland. In lung, it is found in alveolar type II cells but not in bronchiolar epithelium.

It localises to the apical cell membrane. It catalyses the reaction 3 Na(+)(out) + phosphate(out) = 3 Na(+)(in) + phosphate(in). Its function is as follows. Involved in actively transporting phosphate into cells via Na(+) cotransport. In Homo sapiens (Human), this protein is Sodium-dependent phosphate transport protein 2B (SLC34A2).